The sequence spans 503 residues: Probable cytosol aminopeptidase (503 aa).

Mn(2+)-binding residues include Lys-274 and Asp-279. The active site involves Lys-286. 3 residues coordinate Mn(2+): Asp-297, Asp-356, and Glu-358. Residue Arg-360 is part of the active site.

The protein belongs to the peptidase M17 family. It depends on Mn(2+) as a cofactor.

The protein localises to the cytoplasm. The catalysed reaction is Release of an N-terminal amino acid, Xaa-|-Yaa-, in which Xaa is preferably Leu, but may be other amino acids including Pro although not Arg or Lys, and Yaa may be Pro. Amino acid amides and methyl esters are also readily hydrolyzed, but rates on arylamides are exceedingly low.. It catalyses the reaction Release of an N-terminal amino acid, preferentially leucine, but not glutamic or aspartic acids.. Presumably involved in the processing and regular turnover of intracellular proteins. Catalyzes the removal of unsubstituted N-terminal amino acids from various peptides. The sequence is that of Probable cytosol aminopeptidase from Burkholderia thailandensis (strain ATCC 700388 / DSM 13276 / CCUG 48851 / CIP 106301 / E264).